A 304-amino-acid chain; its full sequence is MRLPIFLDTDPGIDDAVAIAAAIFAPELDLQLMTTVAGNVSVEKTTRNALQLLHFWNAEIPLAQGASVPLVRAPRNAASVHGESGMAGYDFVEHNRKPLEQPAFLAIRDALMRAPEPVTLVAIGPLTNIALLLSQCPECKPHIRRLVIMGGSAGRGNCTPNAEFNIAADPEAAACVFRSGIEIVMCGLDVTNQAILTPDYLGTLPELNRTGKMLHALFSHYRSGSMQSGLRMHDLCAIAWLVRPDLFTLKPCFVAVETQGEFTSGTTVVDIDGCLGKPANVQVALELDVKGFQQWVAEVLAKAS.

The active site involves histidine 233.

Belongs to the IUNH family. RihC subfamily.

In terms of biological role, hydrolyzes both purine and pyrimidine ribonucleosides with a broad-substrate specificity. This is Non-specific ribonucleoside hydrolase RihC from Escherichia fergusonii (strain ATCC 35469 / DSM 13698 / CCUG 18766 / IAM 14443 / JCM 21226 / LMG 7866 / NBRC 102419 / NCTC 12128 / CDC 0568-73).